Here is a 312-residue protein sequence, read N- to C-terminus: MIEFEKPTITKIDENKDYGRFVIEPLERGYGTTLGNSLRRVLLASLPGAAVTSIKIDGVLHEFDTVPGVREDVMQIILNIKGIAVKSYVEDEKKIELDVVGPAEVTAGDILTDSDIEIVNPDHYLFTIADGATFKAVLTVNSGRGYVPAEDNKKDDAPVGTLAVDSIYTPVKKVNYQVEPARVGSNDGFDKLTLEINTNGTIIPEDALGLSARILMEHLGLFTDLTEVAKSAEVMKEAEVASDDRMLDRTIEELDLSVRSYNCLKRAGINTVFDLTEKTEPEMMKVRNLGRKSLEEVKVKLADLGLGLKKDK.

The tract at residues 1–226 is alpha N-terminal domain (alpha-NTD); the sequence is MIEFEKPTIT…EHLGLFTDLT (226 aa). Positions 242–312 are alpha C-terminal domain (alpha-CTD); the sequence is SDDRMLDRTI…DLGLGLKKDK (71 aa).

It belongs to the RNA polymerase alpha chain family. In terms of assembly, homodimer. The RNAP catalytic core consists of 2 alpha, 1 beta, 1 beta' and 1 omega subunit. When a sigma factor is associated with the core the holoenzyme is formed, which can initiate transcription.

It carries out the reaction RNA(n) + a ribonucleoside 5'-triphosphate = RNA(n+1) + diphosphate. Functionally, DNA-dependent RNA polymerase catalyzes the transcription of DNA into RNA using the four ribonucleoside triphosphates as substrates. This Streptococcus suis (strain 98HAH33) protein is DNA-directed RNA polymerase subunit alpha.